We begin with the raw amino-acid sequence, 1603 residues long: Vitellogenin-4 (1603 aa).

Positions M1–A15 are cleaved as a signal peptide. The Vitellogenin domain occupies F24–V685. The N-linked (GlcNAc...) asparagine glycan is linked to N1266. A VWFD domain is found at A1306–E1475. 2 disulfide bridges follow: C1308/C1438 and C1330/C1474.

Expressed in the intestine of adult hermaphrodites.

Its subcellular location is the secreted. Functionally, precursor of the egg-yolk proteins that are sources of nutrients during embryonic development. Together with other vitellogenins, may play a role in modulating life-span, acting via induction of autophagy and lysosomal lipolysis. The protein is Vitellogenin-4 (vit-4) of Caenorhabditis elegans.